The chain runs to 320 residues: Methionyl-tRNA formyltransferase (320 aa).

111–114 lines the (6S)-5,6,7,8-tetrahydrofolate pocket; that stretch reads SLLP.

The protein belongs to the Fmt family.

It carries out the reaction L-methionyl-tRNA(fMet) + (6R)-10-formyltetrahydrofolate = N-formyl-L-methionyl-tRNA(fMet) + (6S)-5,6,7,8-tetrahydrofolate + H(+). In terms of biological role, attaches a formyl group to the free amino group of methionyl-tRNA(fMet). The formyl group appears to play a dual role in the initiator identity of N-formylmethionyl-tRNA by promoting its recognition by IF2 and preventing the misappropriation of this tRNA by the elongation apparatus. This chain is Methionyl-tRNA formyltransferase, found in Methylacidiphilum infernorum (isolate V4) (Methylokorus infernorum (strain V4)).